Here is a 291-residue protein sequence, read N- to C-terminus: Gamma-soluble NSF attachment protein (291 aa).

The protein belongs to the SNAP family.

The protein resides in the membrane. Required for vesicular transport between the endoplasmic reticulum and the Golgi apparatus. Binds to SNARE complex and then recruits NSF to disassemble it. This Arabidopsis thaliana (Mouse-ear cress) protein is Gamma-soluble NSF attachment protein (GSNAP).